The following is a 352-amino-acid chain: Ribosome biogenesis protein BRX1 homolog (352 aa).

The segment at 1-47 is disordered; sequence MAATKRKRRGDLEVQAKKPKKNRKDAGQPAKQADVAKEAEEEKDRIP. A compositionally biased stretch (basic and acidic residues) spans 34-46; the sequence is DVAKEAEEEKDRI. The region spanning 59 to 248 is the Brix domain; it reads ERILIFSSRG…LIKIFQGSFG (190 aa). Lys-159 is covalently cross-linked (Glycyl lysine isopeptide (Lys-Gly) (interchain with G-Cter in SUMO2)). The residue at position 260 (Ser-260) is a Phosphoserine. N6-acetyllysine is present on Lys-275. The interval 281 to 301 is disordered; the sequence is QVKDVQKSRKKEPKTILPHDP. Residues Lys-313 and Lys-321 each participate in a glycyl lysine isopeptide (Lys-Gly) (interchain with G-Cter in SUMO2) cross-link.

It belongs to the BRX1 family.

The protein resides in the nucleus. It is found in the nucleolus. In terms of biological role, required for biogenesis of the 60S ribosomal subunit. This chain is Ribosome biogenesis protein BRX1 homolog (Brix1), found in Rattus norvegicus (Rat).